The primary structure comprises 240 residues: Orotidine 5'-phosphate decarboxylase (240 aa).

Residues Asp15, Lys37, 64–73, Thr127, Arg188, Gln197, Gly217, and Arg218 each bind substrate; that span reads DLKYHDIPNT. Lys66 (proton donor) is an active-site residue.

Belongs to the OMP decarboxylase family. Type 1 subfamily. In terms of assembly, homodimer.

It catalyses the reaction orotidine 5'-phosphate + H(+) = UMP + CO2. The protein operates within pyrimidine metabolism; UMP biosynthesis via de novo pathway; UMP from orotate: step 2/2. Its function is as follows. Catalyzes the decarboxylation of orotidine 5'-monophosphate (OMP) to uridine 5'-monophosphate (UMP). This chain is Orotidine 5'-phosphate decarboxylase, found in Geobacter sp. (strain M21).